The chain runs to 98 residues: Large ribosomal subunit protein uL23 (98 aa).

Belongs to the universal ribosomal protein uL23 family. In terms of assembly, part of the 50S ribosomal subunit. Contacts protein L29, and trigger factor when it is bound to the ribosome.

One of the early assembly proteins it binds 23S rRNA. One of the proteins that surrounds the polypeptide exit tunnel on the outside of the ribosome. Forms the main docking site for trigger factor binding to the ribosome. The sequence is that of Large ribosomal subunit protein uL23 from Clostridium beijerinckii (strain ATCC 51743 / NCIMB 8052) (Clostridium acetobutylicum).